The following is a 319-amino-acid chain: Cobalamin biosynthesis protein CbiB (319 aa).

A run of 5 helical transmembrane segments spans residues isoleucine 52–alanine 74, isoleucine 79–leucine 101, glycine 155–valine 177, tyrosine 207–tryptophan 229, and leucine 296–valine 318.

Belongs to the CobD/CbiB family.

The protein localises to the cell membrane. It functions in the pathway cofactor biosynthesis; adenosylcobalamin biosynthesis; adenosylcobalamin from cob(II)yrinate a,c-diamide: step 4/7. In terms of biological role, converts cobyric acid to cobinamide by the addition of aminopropanol on the F carboxylic group. However, the true cosubstrate could be (R)-1-amino-2-propanol O-2-phosphate, leading to cobinamide phosphate. This chain is Cobalamin biosynthesis protein CbiB, found in Salmonella typhi.